The following is a 117-amino-acid chain: Conotoxin vil14.2 (117 aa).

A signal peptide spans 1–22; the sequence is MGFRVLVLVVMATTFALPFTFF. Residues 23–90 constitute a propeptide that is removed on maturation; sequence EEPGRSPFRP…FAELSVGQRR (68 aa). A disordered region spans residues 53–77; the sequence is RADGQPPDMRQPEMRRPEMRRPEVR. The span at 62 to 77 shows a compositional bias: basic and acidic residues; the sequence is RQPEMRRPEMRRPEVR. Disulfide bonds link Cys96–Cys116 and Cys100–Cys112.

Belongs to the conotoxin R superfamily. As to expression, expressed by the venom duct.

It is found in the secreted. The chain is Conotoxin vil14.2 from Conus villepinii (Villepin's cone).